The following is a 431-amino-acid chain: Serine--tRNA ligase (431 aa).

Position 237 to 239 (Thr237 to Glu239) interacts with L-serine. ATP is bound at residue Arg268–Glu270. Glu291 is an L-serine binding site. ATP is bound at residue Glu355–Ser358. Ser390 is an L-serine binding site.

The protein belongs to the class-II aminoacyl-tRNA synthetase family. Type-1 seryl-tRNA synthetase subfamily. Homodimer. The tRNA molecule binds across the dimer.

It is found in the cytoplasm. It catalyses the reaction tRNA(Ser) + L-serine + ATP = L-seryl-tRNA(Ser) + AMP + diphosphate + H(+). The catalysed reaction is tRNA(Sec) + L-serine + ATP = L-seryl-tRNA(Sec) + AMP + diphosphate + H(+). It participates in aminoacyl-tRNA biosynthesis; selenocysteinyl-tRNA(Sec) biosynthesis; L-seryl-tRNA(Sec) from L-serine and tRNA(Sec): step 1/1. Its function is as follows. Catalyzes the attachment of serine to tRNA(Ser). Is also able to aminoacylate tRNA(Sec) with serine, to form the misacylated tRNA L-seryl-tRNA(Sec), which will be further converted into selenocysteinyl-tRNA(Sec). The polypeptide is Serine--tRNA ligase (Neisseria gonorrhoeae (strain ATCC 700825 / FA 1090)).